The chain runs to 120 residues: Large ribosomal subunit protein uL22 (120 aa).

Residues M1–R22 are disordered.

Belongs to the universal ribosomal protein uL22 family. In terms of assembly, part of the 50S ribosomal subunit.

This protein binds specifically to 23S rRNA; its binding is stimulated by other ribosomal proteins, e.g. L4, L17, and L20. It is important during the early stages of 50S assembly. It makes multiple contacts with different domains of the 23S rRNA in the assembled 50S subunit and ribosome. Functionally, the globular domain of the protein is located near the polypeptide exit tunnel on the outside of the subunit, while an extended beta-hairpin is found that lines the wall of the exit tunnel in the center of the 70S ribosome. The chain is Large ribosomal subunit protein uL22 from Borreliella burgdorferi (strain ATCC 35210 / DSM 4680 / CIP 102532 / B31) (Borrelia burgdorferi).